Here is a 267-residue protein sequence, read N- to C-terminus: Phosphoethanolamine/phosphocholine phosphatase (267 aa).

Residue Asp32 is the Nucleophile of the active site. The Mg(2+) site is built by Asp32 and Asp34. The active-site Proton donor is Asp34. Substrate contacts are provided by Asp43 and Asp123. Asp203 provides a ligand contact to Mg(2+).

Belongs to the HAD-like hydrolase superfamily. PHOSPHO family. Mg(2+) is required as a cofactor. In terms of tissue distribution, expressed at sites of mineralization in bone and cartilage. Highly expressed in osteoblast cell line SaOS-2 which produces a mineralized matrix, but not in MG-63 cell line, which do not mineralize.

Its subcellular location is the extracellular vesicle. The enzyme catalyses phosphoethanolamine + H2O = ethanolamine + phosphate. The catalysed reaction is phosphocholine + H2O = choline + phosphate. In terms of biological role, phosphatase that has a high activity toward phosphoethanolamine (PEA) and phosphocholine (PCho). Involved in the generation of inorganic phosphate for bone mineralization. Acts in a non-redundant manner with PHOSPHO1 in skeletal mineralization: while PHOSPHO1 mediates the initiation of hydroxyapatite crystallization in the matrix vesicles (MVs), ALPL/TNAP catalyzes the spread of hydroxyapatite crystallization in the extracellular matrix. This chain is Phosphoethanolamine/phosphocholine phosphatase, found in Homo sapiens (Human).